A 1167-amino-acid polypeptide reads, in one-letter code: Pesticidal crystal protein Cry21Aa (1167 aa).

It belongs to the delta endotoxin family.

Functionally, endotoxin with nematicidal activity. This Bacillus thuringiensis protein is Pesticidal crystal protein Cry21Aa (cry21Aa).